The following is a 526-amino-acid chain: MTSRRSHGDVTPFLTQADNTEEEGVRDPESQSSDEEEEEGKDHGKETHLLTGISYKRSVIIVIILFYINLLNYMDRFTVAGVLPDIKKAFNISDSNSGLVQTVFICSYMFLAPVFGYLGDRYNRKLIMCVGISFWSLVTLLSSFVSNQYFWLFLITRGLVGVGEASYSTIAPTIIADLFLADQRTRMLSFFYFATPVGCGLGYIVGSEMTSAAGDWHWALRVTPGLGLLAVLLLIFVAEEPPRGALERKTDRPLTNTSWSSDMKALLKNPSFILSTFGFTTVAFVTGALALWGPTYLMRSRMVIYKSKPCEGGICNYDDSMIFGGITCITGILGVLTGVEISKRYRKTNPRADPLVCAVGMISSAPFLFLSLAFADTSLVATYVFIFIGETLLSLNWALVADILLYVVIPTRRSTAEALQIVVSHLLGDAGSPYLIGVISDQIQKGKPASFLIQMRSLEYALMICAFVGVIGGGFFLTTALFIEKDRKKAELFSQGLLPADETDAERIVVPKRGRSTKVPVSSVLI.

Residues 1-44 (MTSRRSHGDVTPFLTQADNTEEEGVRDPESQSSDEEEEEGKDHG) are disordered. The next 12 helical transmembrane spans lie at 59–79 (VIIV…RFTV), 98–118 (GLVQ…FGYL), 126–146 (LIMC…SFVS), 159–179 (LVGV…ADLF), 187–207 (MLSF…IVGS), 218–238 (WALR…IFVA), 272–292 (FILS…LALW), 321–341 (MIFG…GVEI), 355–375 (LVCA…LAFA), 384–404 (VFIF…ADIL), 419–439 (LQIV…IGVI), and 463–483 (MICA…ALFI).

This sequence belongs to the major facilitator superfamily. Spinster (TC 2.A.1.49) family.

The protein resides in the lysosome membrane. It catalyses the reaction a 1-acyl-sn-glycero-3-phosphocholine(out) + H(+)(out) = a 1-acyl-sn-glycero-3-phosphocholine(in) + H(+)(in). It carries out the reaction a 1-acyl-sn-glycero-3-phosphoethanolamine(out) + H(+)(out) = a 1-acyl-sn-glycero-3-phosphoethanolamine(in) + H(+)(in). The enzyme catalyses a 1-O-(1Z-alkenyl)-sn-glycero-3-phosphocholine(out) + H(+)(out) = a 1-O-(1Z-alkenyl)-sn-glycero-3-phosphocholine(in) + H(+)(in). The catalysed reaction is a 1-O-(1Z-alkenyl)-sn-glycero-3-phosphoethanolamine(out) + H(+)(out) = a 1-O-(1Z-alkenyl)-sn-glycero-3-phosphoethanolamine(in) + H(+)(in). Functionally, mediates the rate-limiting, proton-dependent, lysosomal efflux of lysophospholipids. Selective for zwitterionic headgroups such as lysophosphatidylcholine (LPC) and lysophosphatidylethanolamine (LPE). Essential player in lysosomal homeostasis. The chain is Protein spinster homolog 1 (spns1) from Xenopus laevis (African clawed frog).